Reading from the N-terminus, the 664-residue chain is UvrABC system protein B (664 aa).

Positions 23-412 (EGLNRGMRFQ…VVEQIIRPTG (390 aa)) constitute a Helicase ATP-binding domain. 36–43 (GVTGSGKT) lines the ATP pocket. The Beta-hairpin signature appears at 89–112 (YYDYYQPEAYIPTKDLYIEKNADI). One can recognise a Helicase C-terminal domain in the interval 429-588 (DLVNEIVKVK…ITPRSVIKPL (160 aa)). In terms of domain architecture, UVR spans 622-657 (EEYMAVLEEEMYRAASELRYEDAAALRDELFRIREE).

The protein belongs to the UvrB family. In terms of assembly, forms a heterotetramer with UvrA during the search for lesions. Interacts with UvrC in an incision complex.

Its subcellular location is the cytoplasm. Functionally, the UvrABC repair system catalyzes the recognition and processing of DNA lesions. A damage recognition complex composed of 2 UvrA and 2 UvrB subunits scans DNA for abnormalities. Upon binding of the UvrA(2)B(2) complex to a putative damaged site, the DNA wraps around one UvrB monomer. DNA wrap is dependent on ATP binding by UvrB and probably causes local melting of the DNA helix, facilitating insertion of UvrB beta-hairpin between the DNA strands. Then UvrB probes one DNA strand for the presence of a lesion. If a lesion is found the UvrA subunits dissociate and the UvrB-DNA preincision complex is formed. This complex is subsequently bound by UvrC and the second UvrB is released. If no lesion is found, the DNA wraps around the other UvrB subunit that will check the other stand for damage. This chain is UvrABC system protein B, found in Thermotoga maritima (strain ATCC 43589 / DSM 3109 / JCM 10099 / NBRC 100826 / MSB8).